The following is a 377-amino-acid chain: MSRGIIIIGSGFAARQLVKNIRKQDAHVPLTLIAADSMDEYNKPDLSHVISQSQRADDLTRQLAGEFAEQFNLRLFPHTWVTDIDADAHVVKSQDKQWQYDKLVLTTGATAFVPPIAGRELMLTLNSQQEYRACETPLRDAQRVLIVGGGLIGSELAMDFCRAGKTVTLMDNAASLLASLMPPEVSSRLQHHLTDMGVHLLLKSQLQKLEKTEAGIRATLVSQHSIEVDAVIAATGLRPETALARRAGVAVNRGVCVDSYLQTSHPDIYAIGDCAEINGQVLPFLQPIQLSAMYLAKNLLGGNAPLKLPAMLVKVKTPELPLHLAGETQRRDLSWQITAESDGMIAKGMSGEGQLRAFVVSEDRMKEAFALLKTLSV.

It belongs to the FAD-dependent oxidoreductase family. FAD serves as cofactor.

Its subcellular location is the cytoplasm. It catalyses the reaction 2 reduced [nitric oxide reductase rubredoxin domain] + NAD(+) + H(+) = 2 oxidized [nitric oxide reductase rubredoxin domain] + NADH. The protein operates within nitrogen metabolism; nitric oxide reduction. One of at least two accessory proteins for anaerobic nitric oxide (NO) reductase. Reduces the rubredoxin moiety of NO reductase. This Salmonella typhi protein is Nitric oxide reductase FlRd-NAD(+) reductase.